A 395-amino-acid polypeptide reads, in one-letter code: MSNVHELNFLKEKIQELKDQGVYRQLPVLEGPNEAESILNGKKVINLSSNNYLGFANHPRLKKAAIEAVEKYGVGSGAVRTIVGNMDIHEILDKKLAEFKREEAVMSFQSGFNCNAGTIQAITEKGDLIISDELNHASIIDGARLSRADKTIFKHADMNNLEEVLKANRDKYRNMLIITDGVFSMDGDIAPLPDIVGLAEKYNAMTYVDDAHGSGVLGESGRGTVDHFGLHGRVDFTIGTLSKAIGVVGGYVAGSATMRDWLSHRGRPLLFSTSLPPAAIAAITEAINMLMTTTEYTDRLWDNAKYFKAKMSQLGFNIGNSQTPITPVIIGDEAKTMEFSRKLLENGVFVSAIVFPTVPKGTGRLRCMVTAGHTKEQLDRAVETFKKVGEEMNLL.

A substrate-binding site is contributed by arginine 24. Position 111 to 112 (111 to 112 (GF)) interacts with pyridoxal 5'-phosphate. Histidine 136 contacts substrate. Pyridoxal 5'-phosphate contacts are provided by residues serine 184, 209 to 212 (DDAH), and 240 to 243 (TLSK). Lysine 243 is subject to N6-(pyridoxal phosphate)lysine. A substrate-binding site is contributed by threonine 357.

This sequence belongs to the class-II pyridoxal-phosphate-dependent aminotransferase family. BioF subfamily. As to quaternary structure, homodimer. Pyridoxal 5'-phosphate serves as cofactor.

The catalysed reaction is 6-carboxyhexanoyl-[ACP] + L-alanine + H(+) = (8S)-8-amino-7-oxononanoate + holo-[ACP] + CO2. It participates in cofactor biosynthesis; biotin biosynthesis. Catalyzes the decarboxylative condensation of pimeloyl-[acyl-carrier protein] and L-alanine to produce 8-amino-7-oxononanoate (AON), [acyl-carrier protein], and carbon dioxide. In Alkaliphilus oremlandii (strain OhILAs) (Clostridium oremlandii (strain OhILAs)), this protein is 8-amino-7-oxononanoate synthase.